A 332-amino-acid chain; its full sequence is uncharacterized protein (332 aa).

An N-terminal signal peptide occupies residues 1-26 (MSSLGKLLKLTLLGILLSFSCKFVFG).

It is found in the endoplasmic reticulum. This is an uncharacterized protein from Schizosaccharomyces pombe (strain 972 / ATCC 24843) (Fission yeast).